Reading from the N-terminus, the 359-residue chain is MSKDRDGRRTSRRGTLKKIGGFSLGALSFGAVGRTQAATGSSVTTADIAPPGPNGDPKSVQIDDKYTGAEMYGEGDFRVGLGTDLTMYPPVYRESLGNGSGGWEFDFTVCGSTACRFVDSNGDVKEDDKAKEMWWQEINFNDINQDLYSRNDSDWVGSTPADTQPEFDYTEFALARDGVTLALTALNPAMGSLALGATYFLSDMVNWIASQHEDDSSLKRKWDYDGLSGPLYADSSTYLLARDEMTSNSYESFTIDNIAVAFPEFPVRTKYYVTFTAPDDPSTQSISTLEEEGIYRVPATEVAAARPPGSRRSKSAADEMVYVADPKKFIEVEPVKNPSIPDRIYEEIEQKKKQRSRKQ.

The signal sequence occupies residues 1 to 46; the sequence is MSKDRDGRRTSRRGTLKKIGGFSLGALSFGAVGRTQAATGSSVTTA. Disordered stretches follow at residues 40–59 and 340–359; these read GSSVTTADIAPPGPNGDPKS and IPDRIYEEIEQKKKQRSRKQ.

The protein resides in the secreted. In terms of biological role, has antibacterial activity against other haloarchaeons. Interacts with the membrane of the target cells where it causes permeability changes that result in an ionic imbalance leading to cell lysis and death. This is Halocin-H4 (halH4) from Haloferax mediterranei (strain ATCC 33500 / DSM 1411 / JCM 8866 / NBRC 14739 / NCIMB 2177 / R-4) (Halobacterium mediterranei).